Consider the following 324-residue polypeptide: uncharacterized protein (324 aa).

This is an uncharacterized protein from Saccharomyces cerevisiae (strain ATCC 204508 / S288c) (Baker's yeast).